The chain runs to 366 residues: MNLAAMDPTTYDAQLEAKRIKLEQAFAQFETPSIEVFASDPEHYRMRAEFRVWHEGDDLYYYMFDKALNDKVRCDQYLPASTLINEMMAALIAELKPNPSLRHKLFQVDFLSTLSGEILVSLLYHRQLDDQWRAEAIALKAKLSSQFKVNIIGRARKQKIDLDKDFVVESLQVNDKVFHYKQIENSFTQPNAKVAIKMLEWAIDVTQNSQGDLLELYCGNGNFSIALAQNFNRVLATELAKPSVDAAQYNIEINGIDNLQIIRMSAEEFSDAMAKKRSFRRLEGIDLDSYLCNTIFVDPPRAGIDPATLDLVQGYERILYISCNPDTLKDNLQQLYKTHKVTRFALFDQFPYTDHMETGVLLERIK.

Residues glutamine 189, tyrosine 217, asparagine 222, glutamate 238, and aspartate 298 each contribute to the S-adenosyl-L-methionine site. Catalysis depends on cysteine 323, which acts as the Nucleophile. Residue glutamate 357 is the Proton acceptor of the active site.

It belongs to the class I-like SAM-binding methyltransferase superfamily. RNA M5U methyltransferase family. TrmA subfamily.

It catalyses the reaction uridine(54) in tRNA + S-adenosyl-L-methionine = 5-methyluridine(54) in tRNA + S-adenosyl-L-homocysteine + H(+). The catalysed reaction is uridine(341) in tmRNA + S-adenosyl-L-methionine = 5-methyluridine(341) in tmRNA + S-adenosyl-L-homocysteine + H(+). Dual-specificity methyltransferase that catalyzes the formation of 5-methyluridine at position 54 (m5U54) in all tRNAs, and that of position 341 (m5U341) in tmRNA (transfer-mRNA). The protein is tRNA/tmRNA (uracil-C(5))-methyltransferase of Shewanella oneidensis (strain ATCC 700550 / JCM 31522 / CIP 106686 / LMG 19005 / NCIMB 14063 / MR-1).